The primary structure comprises 722 residues: MTLPPPIASTAANTILEKLSFCKSLNHIKQLHAHILRTVINHKLNSFLFNLSVSSSSINLSYALNVFSSIPSPPESIVFNPFLRDLSRSSEPRATILFYQRIRHVGGRLDQFSFLPILKAVSKVSALFEGMELHGVAFKIATLCDPFVETGFMDMYASCGRINYARNVFDEMSHRDVVTWNTMIERYCRFGLVDEAFKLFEEMKDSNVMPDEMILCNIVSACGRTGNMRYNRAIYEFLIENDVRMDTHLLTALVTMYAGAGCMDMAREFFRKMSVRNLFVSTAMVSGYSKCGRLDDAQVIFDQTEKKDLVCWTTMISAYVESDYPQEALRVFEEMCCSGIKPDVVSMFSVISACANLGILDKAKWVHSCIHVNGLESELSINNALINMYAKCGGLDATRDVFEKMPRRNVVSWSSMINALSMHGEASDALSLFARMKQENVEPNEVTFVGVLYGCSHSGLVEEGKKIFASMTDEYNITPKLEHYGCMVDLFGRANLLREALEVIESMPVASNVVIWGSLMSACRIHGELELGKFAAKRILELEPDHDGALVLMSNIYAREQRWEDVRNIRRVMEEKNVFKEKGLSRIDQNGKSHEFLIGDKRHKQSNEIYAKLDEVVSKLKLAGYVPDCGSVLVDVEEEEKKDLVLWHSEKLALCFGLMNEEKEEEKDSCGVIRIVKNLRVCEDCHLFFKLVSKVYEREIIVRDRTRFHCYKNGLCSCRDYW.

13 PPR repeats span residues Glu75–Leu109, Asp110–Ile140, Asp145–Arg175, Asp176–Pro210, Asp211–Met245, Asp246–Arg276, Asn277–Lys307, Asp308–Pro342, Asp343–Ser377, Glu378–Arg408, Asn409–Pro443, Asn444–Pro479, and Lys480–Val514. A type E motif region spans residues Ile515–Asn590. A type E(+) motif region spans residues Gly591 to Lys621. The interval Leu622–Trp722 is type DYW motif.

The protein belongs to the PPR family. PCMP-H subfamily.

This chain is Pentatricopeptide repeat-containing protein At4g14820 (PCMP-H3), found in Arabidopsis thaliana (Mouse-ear cress).